The following is a 278-amino-acid chain: 4-deoxy-L-threo-5-hexosulose-uronate ketol-isomerase (278 aa).

Positions 196, 198, 203, and 245 each coordinate Zn(2+).

This sequence belongs to the KduI family. As to quaternary structure, homohexamer. Zn(2+) is required as a cofactor.

The catalysed reaction is 5-dehydro-4-deoxy-D-glucuronate = 3-deoxy-D-glycero-2,5-hexodiulosonate. Its pathway is glycan metabolism; pectin degradation; 2-dehydro-3-deoxy-D-gluconate from pectin: step 4/5. Functionally, catalyzes the isomerization of 5-dehydro-4-deoxy-D-glucuronate to 3-deoxy-D-glycero-2,5-hexodiulosonate. The protein is 4-deoxy-L-threo-5-hexosulose-uronate ketol-isomerase of Escherichia coli O127:H6 (strain E2348/69 / EPEC).